Consider the following 380-residue polypeptide: Queuine tRNA-ribosyltransferase (380 aa).

Asp96 (proton acceptor) is an active-site residue. Substrate is bound by residues 96-100 (DSGGF), Asp150, Gln193, and Gly220. The RNA binding stretch occupies residues 251-257 (GVGAPDS). Asp270 (nucleophile) is an active-site residue. Residues 275-279 (TRIAR) are RNA binding; important for wobble base 34 recognition. 4 residues coordinate Zn(2+): Cys308, Cys310, Cys313, and His339.

It belongs to the queuine tRNA-ribosyltransferase family. As to quaternary structure, homodimer. Within each dimer, one monomer is responsible for RNA recognition and catalysis, while the other monomer binds to the replacement base PreQ1. Zn(2+) serves as cofactor.

The catalysed reaction is 7-aminomethyl-7-carbaguanine + guanosine(34) in tRNA = 7-aminomethyl-7-carbaguanosine(34) in tRNA + guanine. It participates in tRNA modification; tRNA-queuosine biosynthesis. In terms of biological role, catalyzes the base-exchange of a guanine (G) residue with the queuine precursor 7-aminomethyl-7-deazaguanine (PreQ1) at position 34 (anticodon wobble position) in tRNAs with GU(N) anticodons (tRNA-Asp, -Asn, -His and -Tyr). Catalysis occurs through a double-displacement mechanism. The nucleophile active site attacks the C1' of nucleotide 34 to detach the guanine base from the RNA, forming a covalent enzyme-RNA intermediate. The proton acceptor active site deprotonates the incoming PreQ1, allowing a nucleophilic attack on the C1' of the ribose to form the product. After dissociation, two additional enzymatic reactions on the tRNA convert PreQ1 to queuine (Q), resulting in the hypermodified nucleoside queuosine (7-(((4,5-cis-dihydroxy-2-cyclopenten-1-yl)amino)methyl)-7-deazaguanosine). The protein is Queuine tRNA-ribosyltransferase of Streptococcus pyogenes serotype M3 (strain ATCC BAA-595 / MGAS315).